Here is a 402-residue protein sequence, read N- to C-terminus: Phosphoglycerate kinase (402 aa).

Substrate is bound by residues 24 to 26, R40, 63 to 66, R122, and R155; these read DFN and HFGR. ATP-binding positions include K206, G297, E328, and 357–360; that span reads GGDS.

It belongs to the phosphoglycerate kinase family. As to quaternary structure, monomer.

The protein resides in the cytoplasm. It carries out the reaction (2R)-3-phosphoglycerate + ATP = (2R)-3-phospho-glyceroyl phosphate + ADP. It functions in the pathway carbohydrate degradation; glycolysis; pyruvate from D-glyceraldehyde 3-phosphate: step 2/5. The polypeptide is Phosphoglycerate kinase (Prochlorococcus marinus (strain MIT 9211)).